The sequence spans 202 residues: GTP cyclohydrolase 1 (202 aa).

Residues Cys-90, His-93, and Cys-163 each coordinate Zn(2+).

Belongs to the GTP cyclohydrolase I family. Homomer.

The catalysed reaction is GTP + H2O = 7,8-dihydroneopterin 3'-triphosphate + formate + H(+). The protein operates within cofactor biosynthesis; 7,8-dihydroneopterin triphosphate biosynthesis; 7,8-dihydroneopterin triphosphate from GTP: step 1/1. In Mycolicibacterium gilvum (strain PYR-GCK) (Mycobacterium gilvum (strain PYR-GCK)), this protein is GTP cyclohydrolase 1.